A 267-amino-acid chain; its full sequence is Undecaprenyl-diphosphatase (267 aa).

A run of 7 helical transmembrane segments spans residues 39–59 (PGLAFDVALHFGTLLALIWYF), 87–107 (VLYLIAATIPGGIGGLLLNDL), 112–132 (FRSPVVIATSLIVMGILLWAV), 145–165 (VTLRDAIIVGCAQVLALVPGV), 183–203 (PSVARFSFLMSMPITLAAVIV), 216–236 (LPLLAGVAAAAVSSWFAISVL), and 244–264 (SFGVFAVYRVLLGIVVFATLA).

It belongs to the UppP family.

The protein resides in the cell inner membrane. The enzyme catalyses di-trans,octa-cis-undecaprenyl diphosphate + H2O = di-trans,octa-cis-undecaprenyl phosphate + phosphate + H(+). Functionally, catalyzes the dephosphorylation of undecaprenyl diphosphate (UPP). Confers resistance to bacitracin. The polypeptide is Undecaprenyl-diphosphatase (Gemmatimonas aurantiaca (strain DSM 14586 / JCM 11422 / NBRC 100505 / T-27)).